The following is a 182-amino-acid chain: MDMMKIIKKYINSEEEAQKLLKWAIDNANIYYLRNIVNTKVNIEETKFKTVHNIGIEYSKDNKYKLSYRNKPSIATNEKYKELCNLIRSTNGIEKETLRYLLFGIKCVHAKVEYDIEKVPDYDYSNYFDVLKEKSTIRCVACKSNNTIPMILQTRSSDEEPTVRVVCKDCGKNFAPPRLKFN.

A TFIIS-type zinc finger spans residues 135-175 (STIRCVACKSNNTIPMILQTRSSDEEPTVRVVCKDCGKNFA). Zn(2+)-binding residues include Cys-139, Cys-142, Cys-167, and Cys-170.

The protein belongs to the poxviridae DNA-directed RNA polymerase 30 kDa subunit family. This enzyme consists of at least eight subunits.

It carries out the reaction RNA(n) + a ribonucleoside 5'-triphosphate = RNA(n+1) + diphosphate. Functionally, DNA-dependent RNA polymerase catalyzes the transcription of DNA into RNA using the four ribonucleoside triphosphates as substrates. Rpo30 may have a role in RNA chain elongation. This is DNA-directed RNA polymerase 30 kDa polypeptide (RPO30) from Fowlpox virus (strain NVSL) (FPV).